The chain runs to 134 residues: Large ribosomal subunit protein bL21 (134 aa).

Belongs to the bacterial ribosomal protein bL21 family. Part of the 50S ribosomal subunit. Contacts protein L20.

In terms of biological role, this protein binds to 23S rRNA in the presence of protein L20. The sequence is that of Large ribosomal subunit protein bL21 from Pelagibacter ubique (strain HTCC1062).